The sequence spans 41 residues: Iota-conotoxin-like r11d (41 aa).

4 cysteine pairs are disulfide-bonded: cysteine 2-cysteine 16, cysteine 9-cysteine 19, cysteine 15-cysteine 24, and cysteine 18-cysteine 35. Proline 8 bears the 4-hydroxyproline mark. 4-hydroxyproline is present on proline 26.

Position 41 corresponds to a L-threonine, and not a D-threonine as firstly supposed. Expressed by the venom duct.

The protein localises to the secreted. Iota-conotoxins bind to voltage-gated sodium channels (Nav) and act as agonists by shifting the voltage-dependence of activation to more hyperpolarized levels. Both natural (L-Thr form) and synthetic (D-Thr form) peptides cause paralysis and death following intracranial injection and grooming and hypersensitivity upon intraperitoneal injection into mice. The L-Thr form of the peptide is 7-fold more potent than the D-Thr form. Both natural peptide (L-Thr form) and synthetic peptide (D-Thr form) are active on nerve, and on muscle. This is Iota-conotoxin-like r11d from Conus radiatus (Rayed cone).